The chain runs to 359 residues: N-acetyl-gamma-glutamyl-phosphate reductase (359 aa).

Residue cysteine 162 is part of the active site.

This sequence belongs to the NAGSA dehydrogenase family. Type 1 subfamily.

The protein localises to the cytoplasm. It carries out the reaction N-acetyl-L-glutamate 5-semialdehyde + phosphate + NADP(+) = N-acetyl-L-glutamyl 5-phosphate + NADPH + H(+). It functions in the pathway amino-acid biosynthesis; L-arginine biosynthesis; N(2)-acetyl-L-ornithine from L-glutamate: step 3/4. Its function is as follows. Catalyzes the NADPH-dependent reduction of N-acetyl-5-glutamyl phosphate to yield N-acetyl-L-glutamate 5-semialdehyde. This chain is N-acetyl-gamma-glutamyl-phosphate reductase, found in Prochlorococcus marinus (strain MIT 9211).